The chain runs to 157 residues: Protein Smg (157 aa).

The protein belongs to the Smg family.

The polypeptide is Protein Smg (Escherichia coli O6:H1 (strain CFT073 / ATCC 700928 / UPEC)).